Consider the following 335-residue polypeptide: Anthranilate phosphoribosyltransferase (335 aa).

5-phospho-alpha-D-ribose 1-diphosphate-binding positions include glycine 79, 82–83 (GD), threonine 87, 89–92 (NIST), 107–115 (KHGNRSASS), and alanine 119. Position 79 (glycine 79) interacts with anthranilate. Serine 91 provides a ligand contact to Mg(2+). Anthranilate is bound at residue asparagine 110. Position 165 (arginine 165) interacts with anthranilate. Mg(2+) is bound by residues aspartate 224 and glutamate 225.

The protein belongs to the anthranilate phosphoribosyltransferase family. In terms of assembly, homodimer. Requires Mg(2+) as cofactor.

The catalysed reaction is N-(5-phospho-beta-D-ribosyl)anthranilate + diphosphate = 5-phospho-alpha-D-ribose 1-diphosphate + anthranilate. Its pathway is amino-acid biosynthesis; L-tryptophan biosynthesis; L-tryptophan from chorismate: step 2/5. Functionally, catalyzes the transfer of the phosphoribosyl group of 5-phosphorylribose-1-pyrophosphate (PRPP) to anthranilate to yield N-(5'-phosphoribosyl)-anthranilate (PRA). The polypeptide is Anthranilate phosphoribosyltransferase (Methanobrevibacter smithii (strain ATCC 35061 / DSM 861 / OCM 144 / PS)).